The chain runs to 178 residues: Prion-like protein doppel (178 aa).

The first 25 residues, 1 to 25 (MRKHLGGCWLAIVCILLFSQLCSVK), serve as a signal peptide directing secretion. Residues 27–50 (RGIKHRIKWNRKVLPSTSQVTEAR) form a flexible tail region. A globular region spans residues 51–154 (TAEIRPGAFI…KHCDFWLERG (104 aa)). 2 disulfide bridges follow: Cys-94-Cys-147 and Cys-108-Cys-142. 2 N-linked (GlcNAc...) asparagine glycosylation sites follow: Asn-98 and Asn-110. The tract at residues 124 to 141 (KQDNKLYQRVLWQLIREL) is cu(2+) binding. The GPI-anchor amidated glycine moiety is linked to residue Gly-154. A propeptide spans 155–178 (AGLRVTLDQPMMLCLLVFIWFIVK) (removed in mature form).

It belongs to the prion family. N-glycosylated. Post-translationally, O-glycosylated. Strongly expressed in testis. Detected at low levels in ovary, spleen, kidney and mammary gland.

The protein resides in the cell membrane. Its function is as follows. Required for normal acrosome reaction and for normal male fertility. Can bind Cu(2+). The protein is Prion-like protein doppel (PRND) of Bos taurus (Bovine).